Here is a 407-residue protein sequence, read N- to C-terminus: Phosphopentomutase (407 aa).

Mn(2+) contacts are provided by Asp10, Asp306, His311, Asp347, His348, and His359.

This sequence belongs to the phosphopentomutase family. Requires Mn(2+) as cofactor.

The protein resides in the cytoplasm. It carries out the reaction 2-deoxy-alpha-D-ribose 1-phosphate = 2-deoxy-D-ribose 5-phosphate. The enzyme catalyses alpha-D-ribose 1-phosphate = D-ribose 5-phosphate. The protein operates within carbohydrate degradation; 2-deoxy-D-ribose 1-phosphate degradation; D-glyceraldehyde 3-phosphate and acetaldehyde from 2-deoxy-alpha-D-ribose 1-phosphate: step 1/2. Functionally, isomerase that catalyzes the conversion of deoxy-ribose 1-phosphate (dRib-1-P) and ribose 1-phosphate (Rib-1-P) to deoxy-ribose 5-phosphate (dRib-5-P) and ribose 5-phosphate (Rib-5-P), respectively. This Buchnera aphidicola subsp. Acyrthosiphon pisum (strain Tuc7) protein is Phosphopentomutase.